The primary structure comprises 201 residues: Recombination protein RecR (201 aa).

The C4-type zinc-finger motif lies at 60 to 75; that stretch reads CSRCGNVDTVDPCTVC. A Toprim domain is found at 83–178; sequence SVIIVVEDVS…KITRLAHGVP (96 aa).

It belongs to the RecR family.

Its function is as follows. May play a role in DNA repair. It seems to be involved in an RecBC-independent recombinational process of DNA repair. It may act with RecF and RecO. This chain is Recombination protein RecR, found in Rhizobium etli (strain CIAT 652).